The chain runs to 3903 residues: Centrin-binding protein SFI1 (3903 aa).

Asparagine 159 and asparagine 1728 each carry an N-linked (GlcNAc...) asparagine glycan.

In terms of assembly, interacts with CEN1.

Its subcellular location is the cytoplasm. It localises to the cytoskeleton. The protein resides in the microtubule organizing center. It is found in the centrosome. Functionally, part of the centrosome outer core complex. Plays a role in the initiation and assembly of daughter buds. The protein is Centrin-binding protein SFI1 of Toxoplasma gondii (strain ATCC 50611 / Me49).